The sequence spans 240 residues: Ubiquitin domain-containing protein 1 (240 aa).

Residues 1–48 (MGGCVGRPQGESQRSQSRASGQQRKRAGRNEPLKKERPRWKSDYPMTD) are disordered. Residues 12–22 (SQRSQSRASGQ) show a composition bias toward low complexity. Basic and acidic residues predominate over residues 28–42 (GRNEPLKKERPRWKS). The Ubiquitin-like domain occupies 153–228 (FQLKVRLSTG…DTSYCKPATR (76 aa)).

Its function is as follows. May be involved in the regulation of cellular senescence through a positive feedback loop with TP53. The protein is Ubiquitin domain-containing protein 1 (ubtd1) of Xenopus tropicalis (Western clawed frog).